We begin with the raw amino-acid sequence, 305 residues long: Protein ORANGE, chloroplastic (305 aa).

Residues 1 to 54 (MSCLGRILSVSYPPDPYGSRLSVSKLSSPGRNRRLRWRFTALDSDSSSLDSDSS) constitute a chloroplast transit peptide. Transmembrane regions (helical) follow at residues 144–164 (VYYA…GLLA) and 197–217 (IVAS…VVEV). Positions 206 to 297 (VGVISALMVV…CTGMAMASEH (92 aa)) are CR-type-like. The stretch at 228-235 (CKYCLGTG) is one CXXCXGXG motif repeat. One copy of the CXXCXXXG motif repeat lies at 239-246 (CARCSSTG). One copy of the CXXCXGXG motif repeat lies at 272–279 (CSNCSGAG). A CXXCXXXG motif repeat occupies 283-290 (CPTCLCTG).

The protein belongs to the orange-like family. In terms of assembly, interacts with ERF1-2. As to expression, expressed in young leaves, curds and flower buds.

It is found in the plastid. The protein localises to the chloroplast membrane. Its subcellular location is the nucleus. Involved in chromoplast differentiation. Is associated with a cellular process that triggers the differentiation of pro-plastids or other non-colored plastids into chromoplasts for carotenoid accumulation. Associated with carotenoid accumulation in de-etiolated cotyledons. Controls leaf petiole elongation by suppressing the expression of ERF1 genes. The sequence is that of Protein ORANGE, chloroplastic from Brassica oleracea var. botrytis (Cauliflower).